A 111-amino-acid polypeptide reads, in one-letter code: Large ribosomal subunit protein uL22 (111 aa).

This sequence belongs to the universal ribosomal protein uL22 family. As to quaternary structure, part of the 50S ribosomal subunit.

Functionally, this protein binds specifically to 23S rRNA; its binding is stimulated by other ribosomal proteins, e.g. L4, L17, and L20. It is important during the early stages of 50S assembly. It makes multiple contacts with different domains of the 23S rRNA in the assembled 50S subunit and ribosome. Its function is as follows. The globular domain of the protein is located near the polypeptide exit tunnel on the outside of the subunit, while an extended beta-hairpin is found that lines the wall of the exit tunnel in the center of the 70S ribosome. The sequence is that of Large ribosomal subunit protein uL22 from Xanthomonas oryzae pv. oryzae (strain PXO99A).